The primary structure comprises 272 residues: Orotidine 5'-phosphate decarboxylase (272 aa).

The active-site Proton donor is lysine 95.

It belongs to the OMP decarboxylase family. Type 2 subfamily.

It carries out the reaction orotidine 5'-phosphate + H(+) = UMP + CO2. The protein operates within pyrimidine metabolism; UMP biosynthesis via de novo pathway; UMP from orotate: step 2/2. The sequence is that of Orotidine 5'-phosphate decarboxylase from Cupriavidus taiwanensis (strain DSM 17343 / BCRC 17206 / CCUG 44338 / CIP 107171 / LMG 19424 / R1) (Ralstonia taiwanensis (strain LMG 19424)).